Reading from the N-terminus, the 441-residue chain is Enolase (441 aa).

Gln163 serves as a coordination point for (2R)-2-phosphoglycerate. Glu205 acts as the Proton donor in catalysis. Asp242, Glu288, and Asp315 together coordinate Mg(2+). Lys340, Arg369, Ser370, and Lys391 together coordinate (2R)-2-phosphoglycerate. The active-site Proton acceptor is the Lys340.

The protein belongs to the enolase family. It depends on Mg(2+) as a cofactor.

Its subcellular location is the cytoplasm. It localises to the secreted. It is found in the cell surface. It carries out the reaction (2R)-2-phosphoglycerate = phosphoenolpyruvate + H2O. The protein operates within carbohydrate degradation; glycolysis; pyruvate from D-glyceraldehyde 3-phosphate: step 4/5. In terms of biological role, catalyzes the reversible conversion of 2-phosphoglycerate (2-PG) into phosphoenolpyruvate (PEP). It is essential for the degradation of carbohydrates via glycolysis. The protein is Enolase of Ligilactobacillus salivarius (strain UCC118) (Lactobacillus salivarius).